Here is a 688-residue protein sequence, read N- to C-terminus: PTS system glucoside-specific EIICBA component (688 aa).

The 425-residue stretch at 3–427 folds into the PTS EIIC type-1 domain; sequence KKLFGQLQRI…FKLKTPGRED (425 aa). 10 helical membrane-spanning segments follow: residues 12–32, 81–101, 137–157, 182–202, 223–243, 284–304, 315–335, 340–360, 364–384, and 395–415; these read IGKA…LLAF, LGLA…YLIM, LVLG…MGAL, FVPI…SFAW, LTTF…LHHI, AFTT…AFAI, VVGG…ITEP, FLFV…TSFL, LLGV…ILYG, and LVIP…DFAI. The region spanning 438 to 519 is the PTS EIIB type-1 domain; that stretch reads AKLPFDVLDA…AKIMSGEITK (82 aa). The Phosphocysteine intermediate; for EIIB activity role is filled by Cys-460. Residues 560–664 form the PTS EIIA type-1 domain; that stretch reads DQVFAGKMMG…SIVTPMIITN (105 aa). Residue His-612 is the Tele-phosphohistidine intermediate; for EIIA activity of the active site.

The protein localises to the cell membrane. Its function is as follows. The phosphoenolpyruvate-dependent sugar phosphotransferase system (sugar PTS), a major carbohydrate active -transport system, catalyzes the phosphorylation of incoming sugar substrates concomitantly with their translocation across the cell membrane. This system is involved in alpha- and beta-glucoside transport. The polypeptide is PTS system glucoside-specific EIICBA component (glcB) (Staphylococcus aureus (strain USA300)).